Reading from the N-terminus, the 221-residue chain is Tetraspanin-2 (221 aa).

The Cytoplasmic segment spans residues 1–13; it reads MGRFRGGLRCIKY. The chain crosses the membrane as a helical span at residues 14–34; sequence LLLGFNLLFWLAGSAVIAFGL. The Extracellular portion of the chain corresponds to 35 to 54; that stretch reads WFRFGGAIKELSSEDKSPEY. The helical transmembrane segment at 55-75 threads the bilayer; it reads FYVGLYVLVGAGALMMAVGFF. Over 76 to 90 the chain is Cytoplasmic; the sequence is GCCGAMRESQCVLGS. Residues 91–111 traverse the membrane as a helical segment; the sequence is FFTCLLVIFAAEVTTGVFAFI. Topologically, residues 112–188 are extracellular; sequence GKGVAIRHVQ…ETIISVKLQL (77 aa). A glycan (N-linked (GlcNAc...) asparagine) is linked at Asn-139. A helical transmembrane segment spans residues 189–209; sequence IGIVGIGIAGLTIFGMIFSMV. At 210–221 the chain is on the cytoplasmic side; it reads LCCAIRNSRDVI.

It belongs to the tetraspanin (TM4SF) family.

The protein resides in the membrane. Functionally, may play a role in signalling in oligodendrocytes in the early stages of their terminal differentiation into myelin-forming glia and may also function in stabilizing the mature sheath. This is Tetraspanin-2 (TSPAN2) from Homo sapiens (Human).